Here is a 96-residue protein sequence, read N- to C-terminus: 10.9 kDa protein (96 aa).

The chain is 10.9 kDa protein from Pseudomonas aeruginosa (Bacteriophage Pf1).